The sequence spans 126 residues: Large ribosomal subunit protein eL8 (126 aa).

The protein belongs to the eukaryotic ribosomal protein eL8 family. Part of the 50S ribosomal subunit. Probably part of the RNase P complex.

It localises to the cytoplasm. Its function is as follows. Multifunctional RNA-binding protein that recognizes the K-turn motif in ribosomal RNA, the RNA component of RNase P, box H/ACA, box C/D and box C'/D' sRNAs. The polypeptide is Large ribosomal subunit protein eL8 (Sulfolobus acidocaldarius (strain ATCC 33909 / DSM 639 / JCM 8929 / NBRC 15157 / NCIMB 11770)).